A 199-amino-acid chain; its full sequence is Chaperone protein TorD (199 aa).

This sequence belongs to the TorD/DmsD family. TorD subfamily.

It localises to the cytoplasm. Involved in the biogenesis of TorA. Acts on TorA before the insertion of the molybdenum cofactor and, as a result, probably favors a conformation of the apoenzyme that is competent for acquiring the cofactor. This is Chaperone protein TorD from Shigella boydii serotype 18 (strain CDC 3083-94 / BS512).